A 267-amino-acid chain; its full sequence is Cytochrome b (267 aa).

Helical transmembrane passes span 4–24 (FGSLLGICLMTQILTGLLLAA), 48–69 (WLIRNLHANGASFFFICIYLHI), 84–104 (WNTGVILLLTLMATAFVGYVL), and 149–169 (FFTLHFLLPFMIAGLTIIHLT). H54 and H68 together coordinate heme b. Residues H153 and H167 each contribute to the heme b site. Residue H172 coordinates a ubiquinone. The next 2 helical transmembrane spans lie at 197–217 (LKDILGFTLMFLPLMTLALFA) and 259–267 (LGGVLALAA).

Belongs to the cytochrome b family. As to quaternary structure, the cytochrome bc1 complex contains 11 subunits: 3 respiratory subunits (MT-CYB, CYC1 and UQCRFS1), 2 core proteins (UQCRC1 and UQCRC2) and 6 low-molecular weight proteins (UQCRH/QCR6, UQCRB/QCR7, UQCRQ/QCR8, UQCR10/QCR9, UQCR11/QCR10 and a cleavage product of UQCRFS1). This cytochrome bc1 complex then forms a dimer. It depends on heme b as a cofactor.

Its subcellular location is the mitochondrion inner membrane. Component of the ubiquinol-cytochrome c reductase complex (complex III or cytochrome b-c1 complex) that is part of the mitochondrial respiratory chain. The b-c1 complex mediates electron transfer from ubiquinol to cytochrome c. Contributes to the generation of a proton gradient across the mitochondrial membrane that is then used for ATP synthesis. This Raphus cucullatus (Dodo) protein is Cytochrome b (MT-CYB).